Here is a 156-residue protein sequence, read N- to C-terminus: Sperm acrosome-associated protein 5 (156 aa).

A signal peptide spans 1-18 (MQVSGTIVVILMAANVEA). In terms of domain architecture, C-type lysozyme spans 19–147 (KIYERCDLAK…SEWLRGCHMN (129 aa)). Intrachain disulfides connect cysteine 24/cysteine 144, cysteine 48/cysteine 132, cysteine 82/cysteine 97, and cysteine 93/cysteine 111. The active site involves glutamate 53.

Belongs to the glycosyl hydrolase 22 family.

It localises to the secreted. The enzyme catalyses Hydrolysis of (1-&gt;4)-beta-linkages between N-acetylmuramic acid and N-acetyl-D-glucosamine residues in a peptidoglycan and between N-acetyl-D-glucosamine residues in chitodextrins.. The polypeptide is Sperm acrosome-associated protein 5 (SPACA5) (Bos taurus (Bovine)).